We begin with the raw amino-acid sequence, 173 residues long: Lactoylglutathione lyase (173 aa).

One can recognise a VOC domain in the interval 24–170 (VFNHTMLRVK…DGYWVEVIQP (147 aa)). Histidine 27 is a Ni(2+) binding site. Residue arginine 31 participates in substrate binding. A Ni(2+)-binding site is contributed by glutamate 93. Substrate-binding residues include asparagine 97, arginine 116, and histidine 120. Ni(2+) contacts are provided by histidine 120 and glutamate 166. Catalysis depends on glutamate 166, which acts as the Proton donor/acceptor.

It belongs to the glyoxalase I family. As to quaternary structure, monomer. It depends on Ni(2+) as a cofactor. The cofactor is Zn(2+).

It catalyses the reaction (R)-S-lactoylglutathione = methylglyoxal + glutathione. It participates in secondary metabolite metabolism; methylglyoxal degradation; (R)-lactate from methylglyoxal: step 1/2. Functionally, catalyzes the conversion of hemimercaptal, formed from methylglyoxal and glutathione, to S-lactoylglutathione. The chain is Lactoylglutathione lyase (gloA) from Pseudomonas putida (Arthrobacter siderocapsulatus).